The chain runs to 201 residues: Holliday junction branch migration complex subunit RuvA (201 aa).

The domain I stretch occupies residues 1–64; the sequence is MFAFLRGELV…EDAQQLFGFL (64 aa). The domain II stretch occupies residues 65–143; that stretch reads DEEELQLFRL…KIQPAASGKT (79 aa). A flexible linker region spans residues 144 to 154; that stretch reads AGAPQALQLNE. The domain III stretch occupies residues 154–201; that stretch reads EDALAALMTLGFPKPAAQKAISGILETSPGLSVEEVVRAALIAIHNNF.

This sequence belongs to the RuvA family. In terms of assembly, homotetramer. Forms an RuvA(8)-RuvB(12)-Holliday junction (HJ) complex. HJ DNA is sandwiched between 2 RuvA tetramers; dsDNA enters through RuvA and exits via RuvB. An RuvB hexamer assembles on each DNA strand where it exits the tetramer. Each RuvB hexamer is contacted by two RuvA subunits (via domain III) on 2 adjacent RuvB subunits; this complex drives branch migration. In the full resolvosome a probable DNA-RuvA(4)-RuvB(12)-RuvC(2) complex forms which resolves the HJ.

The protein resides in the cytoplasm. The RuvA-RuvB-RuvC complex processes Holliday junction (HJ) DNA during genetic recombination and DNA repair, while the RuvA-RuvB complex plays an important role in the rescue of blocked DNA replication forks via replication fork reversal (RFR). RuvA specifically binds to HJ cruciform DNA, conferring on it an open structure. The RuvB hexamer acts as an ATP-dependent pump, pulling dsDNA into and through the RuvAB complex. HJ branch migration allows RuvC to scan DNA until it finds its consensus sequence, where it cleaves and resolves the cruciform DNA. The polypeptide is Holliday junction branch migration complex subunit RuvA (Chlorobaculum tepidum (strain ATCC 49652 / DSM 12025 / NBRC 103806 / TLS) (Chlorobium tepidum)).